The sequence spans 661 residues: Polyadenylate-binding protein, cytoplasmic and nuclear (661 aa).

Positions 1–11 (MSAAETNQVQE) are enriched in polar residues. Residues 1–61 (MSAAETNQVQ…SAEEQGESSG (61 aa)) form a disordered region. The span at 20-51 (SSSSPAAGGATTATTTNNAESSDATSSSVPAD) shows a compositional bias: low complexity. RRM domains are found at residues 67–145 (ASLY…WSQR), 155–232 (GNIF…KHVS), 248–325 (TNIY…RAQK), and 351–428 (VNLF…LAQR). Positions 473 to 563 (FPPNGRGNAP…PNRPAGGNVP (91 aa)) are disordered. The span at 501 to 511 (EQWPRPGPNGQ) shows a compositional bias: pro residues. Positions 523–532 (QDFNGQNMRP) are enriched in polar residues. The span at 533–549 (QQQQQQQQQQQQQQQQQ) shows a compositional bias: low complexity. A PABC domain is found at 563 to 644 (PAKDLAALIA…ALNAFEEYKN (82 aa)).

The protein belongs to the polyadenylate-binding protein type-1 family.

It localises to the cytoplasm. The protein resides in the nucleus. In terms of biological role, binds the poly(A) tail of mRNA. Appears to be an important mediator of the multiple roles of the poly(A) tail in mRNA biogenesis, stability and translation. In the nucleus, involved in both mRNA cleavage and polyadenylation. Is also required for efficient mRNA export to the cytoplasm. Acts in concert with a poly(A)-specific nuclease (PAN) to affect poly(A) tail shortening, which may occur concomitantly with either nucleocytoplasmic mRNA transport or translational initiation. In the cytoplasm, stimulates translation initiation and regulates mRNA decay through translation termination-coupled poly(A) shortening, probably mediated by PAN. The sequence is that of Polyadenylate-binding protein, cytoplasmic and nuclear (PAB1) from Lodderomyces elongisporus (strain ATCC 11503 / CBS 2605 / JCM 1781 / NBRC 1676 / NRRL YB-4239) (Yeast).